The chain runs to 112 residues: Large ribosomal subunit protein uL24 (112 aa).

This sequence belongs to the universal ribosomal protein uL24 family. In terms of assembly, part of the 50S ribosomal subunit.

In terms of biological role, one of two assembly initiator proteins, it binds directly to the 5'-end of the 23S rRNA, where it nucleates assembly of the 50S subunit. Functionally, one of the proteins that surrounds the polypeptide exit tunnel on the outside of the subunit. The polypeptide is Large ribosomal subunit protein uL24 (Desulfitobacterium hafniense (strain Y51)).